Consider the following 292-residue polypeptide: Acetyl-coenzyme A carboxylase carboxyl transferase subunit beta (292 aa).

The CoA carboxyltransferase N-terminal domain occupies 36-292; that stretch reads MWSKCEKCAK…LLRMHEVDYE (257 aa). Zn(2+)-binding residues include C40, C43, C59, and C62. The C4-type zinc-finger motif lies at 40 to 62; it reads CEKCAKILYTEDLRENFNVCPNC.

It belongs to the AccD/PCCB family. As to quaternary structure, acetyl-CoA carboxylase is a heterohexamer composed of biotin carboxyl carrier protein (AccB), biotin carboxylase (AccC) and two subunits each of ACCase subunit alpha (AccA) and ACCase subunit beta (AccD). Requires Zn(2+) as cofactor.

The protein resides in the cytoplasm. It catalyses the reaction N(6)-carboxybiotinyl-L-lysyl-[protein] + acetyl-CoA = N(6)-biotinyl-L-lysyl-[protein] + malonyl-CoA. The protein operates within lipid metabolism; malonyl-CoA biosynthesis; malonyl-CoA from acetyl-CoA: step 1/1. In terms of biological role, component of the acetyl coenzyme A carboxylase (ACC) complex. Biotin carboxylase (BC) catalyzes the carboxylation of biotin on its carrier protein (BCCP) and then the CO(2) group is transferred by the transcarboxylase to acetyl-CoA to form malonyl-CoA. In Clostridium perfringens (strain 13 / Type A), this protein is Acetyl-coenzyme A carboxylase carboxyl transferase subunit beta.